Reading from the N-terminus, the 421-residue chain is FBD-associated F-box protein At5g56370 (421 aa).

An F-box domain is found at 1 to 52; sequence MDSISLLPDDFLLRILSLLPTKDVLNTSVLSKRWRYLWKLVPKLQYSLIDKN. The FBD domain maps to 332-382; that stretch reads HWEEPSSVPETLMFVLETLEWRNYRGLKMENELASFLLKHSRRLKIATFSP.

In Arabidopsis thaliana (Mouse-ear cress), this protein is FBD-associated F-box protein At5g56370.